The primary structure comprises 867 residues: Schizokinen transporter SchT (867 aa).

The disordered stretch occupies residues 40–62 (HPGKTQEAPSPTQLNTQSPAPNA). Over residues 46–62 (EAPSPTQLNTQSPAPNA) the composition is skewed to polar residues. The TonB box motif lies at 185-192 (IELVVTAT). Positions 197–307 (PIQNVPRSIT…TGGVINIITR (111 aa)) constitute a TBDR plug domain. In terms of domain architecture, TBDR beta-barrel spans 313–867 (KLTSRTEVGV…TLSIKYSFDW (555 aa)). Residues 850–867 (AYAAARGRTLSIKYSFDW) carry the TonB C-terminal box motif.

The protein belongs to the TonB-dependent receptor family.

The protein resides in the cell outer membrane. Its function is as follows. Involved in the TonB-dependent uptake of iron in complex with schizokinen, a dihydroxamate-type siderophore. The protein is Schizokinen transporter SchT of Nostoc sp. (strain PCC 7120 / SAG 25.82 / UTEX 2576).